We begin with the raw amino-acid sequence, 774 residues long: FT-interacting protein 7 (774 aa).

Residues 1-17 are compositionally biased toward basic and acidic residues; sequence MMQRPFRPEEYSLKETS. Residues 1-25 form a disordered region; that stretch reads MMQRPFRPEEYSLKETSPHLGGGAA. C2 domains follow at residues 23 to 143, 182 to 305, and 346 to 472; these read GAAG…PQWY, IPGD…SQWY, and YSSD…THAY. Residues D56, D62, D109, D111, and D116 each coordinate Ca(2+). A run of 3 helical transmembrane segments spans residues 575–595, 606–626, and 714–734; these read IMGVLSPLIAVAKWFDQICHW, ILFVILVLYPELILPTIFLYL, and ATALFVTFCFVAAIVLYVTPF.

This sequence belongs to the MCTP family. As to quaternary structure, interacts with OSH1. Ca(2+) serves as cofactor. Expressed in roots, stems, lemma, palea, pistils and ovules. Expressed at low levels in leaves.

Its subcellular location is the cell membrane. Functionally, promotes nuclear translocation of the transcription factor OSH1, which directly suppresses the auxin biosynthetic gene YUCCA4 during the late development of anthers. Reduction of auxin levels at late stage of anther development, after meiosis of microspore mother cells, is necessary for normal anther dehiscence and seed setting. Required for jasmonate (JA) biosynthetic genes expression and JA production in anthers. This is FT-interacting protein 7 from Oryza sativa subsp. japonica (Rice).